The chain runs to 468 residues: RUS family member 1 (468 aa).

N-acetylalanine is present on Ala2. Thr49 bears the Phosphothreonine mark. Residues 247–267 (LLMLPLVSGCPGFSLGCFFFL) form a helical membrane-spanning segment.

This sequence belongs to the RUS1 family.

It localises to the membrane. This is RUS family member 1 (Rusf1) from Pongo abelii (Sumatran orangutan).